Consider the following 103-residue polypeptide: N(4)-acetylcytidine amidohydrolase (103 aa).

In terms of domain architecture, ASCH spans 6 to 101 (ITFFQRFQDD…QTQFYVIEFK (96 aa)). Lys-21 serves as the catalytic Proton acceptor. The active-site Nucleophile is the Thr-24. Residue Glu-74 is the Proton donor of the active site.

The protein belongs to the N(4)-acetylcytidine amidohydrolase family.

The catalysed reaction is N(4)-acetylcytidine + H2O = cytidine + acetate + H(+). It catalyses the reaction N(4)-acetyl-2'-deoxycytidine + H2O = 2'-deoxycytidine + acetate + H(+). It carries out the reaction N(4)-acetylcytosine + H2O = cytosine + acetate + H(+). Its function is as follows. Catalyzes the hydrolysis of N(4)-acetylcytidine (ac4C). The sequence is that of N(4)-acetylcytidine amidohydrolase (yqfB) from Escherichia coli O81 (strain ED1a).